Here is a 402-residue protein sequence, read N- to C-terminus: Acetate kinase (402 aa).

Asn-10 contacts Mg(2+). Residue Lys-17 participates in ATP binding. Arg-89 contributes to the substrate binding site. Asp-148 functions as the Proton donor/acceptor in the catalytic mechanism. Residues 208-212 (HLGNG), 283-285 (DCR), and 334-338 (GIGEN) each bind ATP. Glu-389 is a binding site for Mg(2+).

Belongs to the acetokinase family. As to quaternary structure, homodimer. It depends on Mg(2+) as a cofactor. Mn(2+) serves as cofactor.

The protein resides in the cytoplasm. The enzyme catalyses acetate + ATP = acetyl phosphate + ADP. The protein operates within metabolic intermediate biosynthesis; acetyl-CoA biosynthesis; acetyl-CoA from acetate: step 1/2. Functionally, catalyzes the formation of acetyl phosphate from acetate and ATP. Can also catalyze the reverse reaction. The chain is Acetate kinase from Actinobacillus pleuropneumoniae serotype 7 (strain AP76).